The chain runs to 27 residues: Fructokinase (27 aa).

This sequence belongs to the ROK (NagC/XylR) family. In terms of assembly, homodimer. Mg(2+) is required as a cofactor.

The catalysed reaction is D-fructose + ATP = D-fructose 6-phosphate + ADP + H(+). With respect to regulation, inhibition by zinc ions. The protein is Fructokinase of Fusobacterium mortiferum.